Reading from the N-terminus, the 351-residue chain is Protein arginine N-methyltransferase 1 (351 aa).

Residues 30–331 form the SAM-dependent MTase PRMT-type domain; sequence KDYYFDSYAH…KNNRDLDFTV (302 aa). Residues histidine 43, arginine 52, glycine 76, glutamate 98, and glutamate 127 each contribute to the S-adenosyl-L-methionine site. Residues glutamate 142 and glutamate 151 contribute to the active site.

Belongs to the class I-like SAM-binding methyltransferase superfamily. Protein arginine N-methyltransferase family. Homodimer. Homooctamer; individual homodimers associates to form a homooctamer and homooligomerization is required for proper localization to the cell membrane. Individual homodimers can associate to form a homohexamer. Component of a complex with lsm14a/rap55a. Interacts with cirbp.

The protein localises to the nucleus. It localises to the nucleoplasm. The protein resides in the cytoplasm. Its subcellular location is the cytosol. The enzyme catalyses L-arginyl-[protein] + 2 S-adenosyl-L-methionine = N(omega),N(omega)-dimethyl-L-arginyl-[protein] + 2 S-adenosyl-L-homocysteine + 2 H(+). The catalysed reaction is L-arginyl-[protein] + S-adenosyl-L-methionine = N(omega)-methyl-L-arginyl-[protein] + S-adenosyl-L-homocysteine + H(+). It catalyses the reaction N(omega)-methyl-L-arginyl-[protein] + S-adenosyl-L-methionine = N(omega),N(omega)-dimethyl-L-arginyl-[protein] + S-adenosyl-L-homocysteine + H(+). Arginine methyltransferase that methylates (mono and asymmetric dimethylation) the guanidino nitrogens of arginyl residues present in target proteins. Constitutes the main enzyme that mediates monomethylation and asymmetric dimethylation of histone H4 'Arg-3' (H4R3me1 and H4R3me2a, respectively), a specific tag for epigenetic transcriptional activation. Methylates ilf3 to regulate its DNA-binding activity. Required for neural induction, playing a key role in the control of epidermal versus neural cell fate choice. Methylates cirbp to regulate its subcellular location. Acts transiently during metamorphosis as a transcription coactivator, enhancing thyroid hormone (T3) receptor (TR)-mediated transcription by enhancing TR binding to the T3 response element (TRE), and histone modification through recruitment of other coactivators. This chain is Protein arginine N-methyltransferase 1, found in Xenopus tropicalis (Western clawed frog).